Here is a 156-residue protein sequence, read N- to C-terminus: MNLNATIFFQMLVFFVLGWFTMKFVWPPLTKAIDERRQKIADGLAAAEKGKADLAQAQARVSLIEASAKSETHARIIEAEKQAASMIEQARREAEAERARIVAQAAQDAAQEVQRAREALRDDVAALAVKGAEQILKREVDARAHAELLNQLKAQL.

Residues 7 to 27 traverse the membrane as a helical segment; that stretch reads IFFQMLVFFVLGWFTMKFVWP.

The protein belongs to the ATPase B chain family. As to quaternary structure, F-type ATPases have 2 components, F(1) - the catalytic core - and F(0) - the membrane proton channel. F(1) has five subunits: alpha(3), beta(3), gamma(1), delta(1), epsilon(1). F(0) has three main subunits: a(1), b(2) and c(10-14). The alpha and beta chains form an alternating ring which encloses part of the gamma chain. F(1) is attached to F(0) by a central stalk formed by the gamma and epsilon chains, while a peripheral stalk is formed by the delta and b chains.

It localises to the cell inner membrane. Its function is as follows. F(1)F(0) ATP synthase produces ATP from ADP in the presence of a proton or sodium gradient. F-type ATPases consist of two structural domains, F(1) containing the extramembraneous catalytic core and F(0) containing the membrane proton channel, linked together by a central stalk and a peripheral stalk. During catalysis, ATP synthesis in the catalytic domain of F(1) is coupled via a rotary mechanism of the central stalk subunits to proton translocation. In terms of biological role, component of the F(0) channel, it forms part of the peripheral stalk, linking F(1) to F(0). The polypeptide is ATP synthase subunit b (Bordetella pertussis (strain Tohama I / ATCC BAA-589 / NCTC 13251)).